Here is a 347-residue protein sequence, read N- to C-terminus: Gamma-glutamyl hydrolase B (347 aa).

The N-terminal stretch at 1-22 (MIKLFSLFIYLYLISNLKLINT) is a signal peptide. The Gamma-glutamyl hydrolase domain maps to 23 to 314 (INNTPVIGIL…THVEQIYIFN (292 aa)). Catalysis depends on Cys128, which acts as the Nucleophile. Asn152, Asn158, and Asn201 each carry an N-linked (GlcNAc...) asparagine glycan. His240 serves as the catalytic Proton donor. N-linked (GlcNAc...) asparagine glycans are attached at residues Asn273, Asn314, and Asn318.

It belongs to the peptidase C26 family.

It is found in the secreted. The protein localises to the extracellular space. The enzyme catalyses (6S)-5,6,7,8-tetrahydrofolyl-(gamma-L-Glu)(n) + (n-1) H2O = (6S)-5,6,7,8-tetrahydrofolate + (n-1) L-glutamate. This is Gamma-glutamyl hydrolase B (gghB) from Dictyostelium discoideum (Social amoeba).